A 296-amino-acid chain; its full sequence is Putative methyltransferase HI_1523 (296 aa).

The protein belongs to the N(4)/N(6)-methyltransferase family.

This chain is Putative methyltransferase HI_1523, found in Haemophilus influenzae (strain ATCC 51907 / DSM 11121 / KW20 / Rd).